A 912-amino-acid polypeptide reads, in one-letter code: Protein translocase subunit SecA (912 aa).

Residues glutamine 87, 105 to 109, and aspartate 508 contribute to the ATP site; that span reads GEGKT. The interval 865 to 912 is disordered; that stretch reads DEEAAQVQSGNAPVPVSQVTRDEPKVGRNDPCPCGSGKKYKHCHGQLS. Zn(2+) contacts are provided by cysteine 896, cysteine 898, cysteine 907, and histidine 908. Positions 902–912 are enriched in basic residues; that stretch reads KKYKHCHGQLS.

It belongs to the SecA family. Monomer and homodimer. Part of the essential Sec protein translocation apparatus which comprises SecA, SecYEG and auxiliary proteins SecDF-YajC and YidC. Zn(2+) serves as cofactor.

The protein localises to the cell inner membrane. Its subcellular location is the cytoplasm. The enzyme catalyses ATP + H2O + cellular proteinSide 1 = ADP + phosphate + cellular proteinSide 2.. Its function is as follows. Part of the Sec protein translocase complex. Interacts with the SecYEG preprotein conducting channel. Has a central role in coupling the hydrolysis of ATP to the transfer of proteins into and across the cell membrane, serving both as a receptor for the preprotein-SecB complex and as an ATP-driven molecular motor driving the stepwise translocation of polypeptide chains across the membrane. The polypeptide is Protein translocase subunit SecA (Xanthomonas oryzae pv. oryzae (strain MAFF 311018)).